We begin with the raw amino-acid sequence, 906 residues long: MTAVHTGNINFKWDPKSLEIRTLAVERLLEPLVTQVTTLVNTNSKGPSNKKRGRSKKAHVLAASVEQATENFLEKGDKIAKESQFLKEELVAAVEDVRKQCDLMKSAAGEFADDPCSSVKRGNMVRAARALLSAVTRLLILADMADVYKLLVQLKLVEDGILKLRNAGTEQDLGIQYKALKPEVDKLNIMAAKRQQELKDVGHRDQMAAARGILQKNVPILYTASQACLQHPDVAAYKANRDLIYKQLQQAVTGISNAAQATASDDASQHPGAGGGELAYALNNFDKQIIVDPLSFSEERFRPSLEERLESIISGAALMADSSCTRDDRRERIVAECNAVRQALQDLLSEYMGNAGRKERSDALNSAIDKMTKKTRDLRRQLRKAVMDHVSDSFLETNVPLLVLVEAAKNGNEKEVKEYAQVFREHANKLIEVANLACSISNNEEGVKLVRMSASQLEALCPQVINAALALAAKPQSKLAQENMDLFKEQWEKQVRVLTDAVDDITSIDDFLAVSENHILEDVNKCVIALQEKDVDGLDRTAGAIRGRAARVIHVVTSEMDNYEPGVYTEKVLEATKLLSNTVMPRFTEQVEAAVEALSSDPAQPMDENEFIDASRLVYDGIRDIRKAVLMIRTPEELDDSDFETEDFDVRSRTSVQTEDDQLIAGQSARAIMAQLPQEQKAKIAEQVASFQEEKSKLDAEVSKWDDSGNDIIVLAKQMCMIMMEMTDFTRGKGPLKNTSDVISAAKKIAEAGSRMDKLGRTIADHCPDSACKQDLLAYLQRIALYCHQLNICSKVKAEVQNLGGELVVSGVDSAMSLIQAAKNLMNAVVQTVKASYVASTKYQKSQGMASLNLPAVSWKMKAPEKKPLVKREKQDETQTKIKRASQKKHVNPVQALSEFKAMDSI.

Thr2 is modified (N-acetylthreonine). The involved in homodimerization stretch occupies residues 2-228 (TAVHTGNINF…PILYTASQAC (227 aa)). A Glycyl lysine isopeptide (Lys-Gly) (interchain with G-Cter in SUMO2) cross-link involves residue Lys57. The interaction with JUP and CTNNB1 stretch occupies residues 97–148 (VRKQCDLMKSAAGEFADDPCSSVKRGNMVRAARALLSAVTRLLILADMADVY). Phosphoserine occurs at positions 264, 268, 295, and 297. The segment at 325–394 (TRDDRRERIV…AVMDHVSDSF (70 aa)) is interaction with alpha-actinin. Thr634 is modified (phosphothreonine). Ser641 carries the post-translational modification Phosphoserine. Phosphothreonine is present on Thr645. A phosphoserine mark is found at Ser652 and Ser655. Thr658 carries the post-translational modification Phosphothreonine. Lys797 participates in a covalent cross-link: Glycyl lysine isopeptide (Lys-Gly) (interchain with G-Cter in SUMO2). At Ser851 the chain carries Phosphoserine. Over residues 864 to 880 (PEKKPLVKREKQDETQT) the composition is skewed to basic and acidic residues. The segment at 864-894 (PEKKPLVKREKQDETQTKIKRASQKKHVNPV) is disordered. Over residues 881-891 (KIKRASQKKHV) the composition is skewed to basic residues.

The protein belongs to the vinculin/alpha-catenin family. Monomer and homodimer; the monomer preferentially binds to CTNNB1 and the homodimer to actin. Component of an cadherin:catenin adhesion complex composed of at least of CDH26, beta-catenin/CTNNB1, alpha-catenin/CTNNA1 and p120 catenin/CTNND1. Possible component of an E-cadherin/ catenin adhesion complex together with E-cadherin/CDH1 and beta-catenin/CTNNB1 or gamma-catenin/JUP; the complex is located to adherens junctions. The stable association of CTNNA1 is controversial as CTNNA1 was shown not to bind to F-actin when assembled in the complex. Alternatively, the CTNNA1-containing complex may be linked to F-actin by other proteins such as LIMA1. Binds AFDN and F-actin. Interacts with ARHGAP21. Interacts with AJUBA. Interacts with LIMA1. Interacts with vinculin/VCL. Interacts with TJP2/ZO2 (via N-terminus). Interacts with TJP1/ZO1 (via N-terminus). Post-translationally, sumoylated. In terms of processing, phosphorylation seems to contribute to the strength of cell-cell adhesion rather than to the basic capacity for cell-cell adhesion.

The protein localises to the cytoplasm. The protein resides in the cytoskeleton. It is found in the cell junction. It localises to the adherens junction. Its subcellular location is the cell membrane. The protein localises to the nucleus. Associates with the cytoplasmic domain of a variety of cadherins. The association of catenins to cadherins produces a complex which is linked to the actin filament network, and which seems to be of primary importance for cadherins cell-adhesion properties. Can associate with both E- and N-cadherins. Originally believed to be a stable component of E-cadherin/catenin adhesion complexes and to mediate the linkage of cadherins to the actin cytoskeleton at adherens junctions. In contrast, cortical actin was found to be much more dynamic than E-cadherin/catenin complexes and CTNNA1 was shown not to bind to F-actin when assembled in the complex suggesting a different linkage between actin and adherens junctions components. The homodimeric form may regulate actin filament assembly and inhibit actin branching by competing with the Arp2/3 complex for binding to actin filaments. Involved in the regulation of WWTR1/TAZ, YAP1 and TGFB1-dependent SMAD2 and SMAD3 nuclear accumulation. May play a crucial role in cell differentiation. This is Catenin alpha-1 from Bos taurus (Bovine).